A 408-amino-acid chain; its full sequence is MDRVFINLHLVSMVNKQQTGSDGYQVVKDVMIGVRNGKVEYVGEPCPSILHGHPDIIDCAHALVTPGFIDCHTHLIFAGNRANEFEQRLQGIPYEEIAKQGGGILSTVQATREASEDELYHLAVHRLEGLKRDGVTTIEIKSGYGLTLDDEIKMLKVVKRISELPDMKVSSTLLAAHAVPPEYKNRSDEYIDLICDTIIPQVVKLNLANHVDVFCEGIGFSTKQCERVFRTALKHGLRIKGHTEQLSNLGGSALAAAMGADSVDHIEYLDEHGVKALTKNNTVATLLPGAFYFLKETKLPPIALLRQYEVPMAIATDFNPGTSPIASLRTIMNMACTLFKLTPEESLRGVTCHAAQALGLQNFRGKIAVGMEADFAIWQLESPAELSYRLGVPDLIARVVDGEIFHEK.

Fe(3+)-binding residues include His72 and His74. Residues His72 and His74 each coordinate Zn(2+). 3 residues coordinate 4-imidazolone-5-propanoate: Arg81, Tyr144, and His177. An N-formimidoyl-L-glutamate-binding site is contributed by Tyr144. His242 is a binding site for Fe(3+). His242 serves as a coordination point for Zn(2+). Residue Gln245 coordinates 4-imidazolone-5-propanoate. Asp317 lines the Fe(3+) pocket. Zn(2+) is bound at residue Asp317. The N-formimidoyl-L-glutamate site is built by Asn319 and Gly321. Thr322 is a 4-imidazolone-5-propanoate binding site.

The protein belongs to the metallo-dependent hydrolases superfamily. HutI family. Requires Zn(2+) as cofactor. The cofactor is Fe(3+).

It localises to the cytoplasm. The enzyme catalyses 4-imidazolone-5-propanoate + H2O = N-formimidoyl-L-glutamate. It participates in amino-acid degradation; L-histidine degradation into L-glutamate; N-formimidoyl-L-glutamate from L-histidine: step 3/3. In terms of biological role, catalyzes the hydrolytic cleavage of the carbon-nitrogen bond in imidazolone-5-propanoate to yield N-formimidoyl-L-glutamate. It is the third step in the universal histidine degradation pathway. This is Imidazolonepropionase from Aliivibrio fischeri (strain MJ11) (Vibrio fischeri).